Reading from the N-terminus, the 234-residue chain is MIKAISIDIDGTITYPNRRLQENAVEAIRLAENLGIPVMLVTGNSACFAYAATILIGTTGPFIAEDGGVIGDKSNNRIFLGDMGDSMILWSELKKRYPNAEMSDTMKYGERRAGLVIKRTVPVEVVRGIIEELNLDLIAVDSGYAIHVKQPHVNKGEGIRNACQKLGITPEQVAHIGDGENDLDAFKVVGYRVAVAQAPEVLKREADHVTTKPYGDGGAEGIIHILKKFGYLEI.

Residue Asp8 is the Nucleophile of the active site. Mg(2+) contacts are provided by Asp8 and Asp10. Lys155 serves as a coordination point for substrate. Residues Asp178 and Asp182 each contribute to the Mg(2+) site.

This sequence belongs to the archaeal SPP-like hydrolase family. The cofactor is Mg(2+).

The enzyme catalyses 2-phosphoglycolate + H2O = glycolate + phosphate. Functionally, catalyzes the dephosphorylation of 2-phosphoglycolate. The sequence is that of Phosphoglycolate phosphatase from Thermococcus sibiricus (strain DSM 12597 / MM 739).